The sequence spans 566 residues: 3-oxosteroid 1-dehydrogenase (566 aa).

Position 10-39 (10-39 (DVVVVGSGAAGMVAALVAAHRGLSTVVVEK)) interacts with FAD.

Belongs to the FAD-dependent oxidoreductase 2 family. 3-oxosteroid dehydrogenase subfamily. FAD is required as a cofactor.

The enzyme catalyses a 3-oxosteroid + A = a 3-oxo-Delta(1)-steroid + AH2. It carries out the reaction a 3-oxo-Delta(4)-steroid + A = a 3-oxo-Delta(1,4)-steroid + AH2. Involved in the degradation of cholesterol. Catalyzes the elimination of the C-1 and C-2 hydrogen atoms of the A-ring from the polycyclic ring structure of 3-ketosteroids. Is also involved in the formation of 3-keto-1,4-diene-steroid from 3-keto-4-ene-steroid. This Mycobacterium tuberculosis (strain CDC 1551 / Oshkosh) protein is 3-oxosteroid 1-dehydrogenase (kstD).